The chain runs to 436 residues: Trigger factor (436 aa).

Residues 163-248 (GDRVVLDFAG…VKEVAEGVLP (86 aa)) enclose the PPIase FKBP-type domain.

The protein belongs to the FKBP-type PPIase family. Tig subfamily.

It localises to the cytoplasm. The enzyme catalyses [protein]-peptidylproline (omega=180) = [protein]-peptidylproline (omega=0). Its function is as follows. Involved in protein export. Acts as a chaperone by maintaining the newly synthesized protein in an open conformation. Functions as a peptidyl-prolyl cis-trans isomerase. In Bordetella parapertussis (strain 12822 / ATCC BAA-587 / NCTC 13253), this protein is Trigger factor.